Reading from the N-terminus, the 347-residue chain is NADH-ubiquinone oxidoreductase chain 2 (347 aa).

A run of 11 helical transmembrane segments spans residues 3 to 23 (PPIFIIIMSTVISGTVIVMTS), 25 to 45 (HWMLTWIGFEMNMLAIIPILM), 59 to 79 (YFLTQATASMLLMMGIIINLL), 96 to 116 (ILMTTALAMKLGLAPFHFWVP), 122 to 142 (ISLSSGMILLTWQKIAPLSIL), 149 to 169 (INPHLLLPMAILSVLIGGWGG), 178 to 198 (IMAYSSIAHMGWMAAILLYNP), 201 to 221 (MFLNLIIYITMTLTTFMLFML), 237 to 257 (APLITSLILTLMLSLGGLPPL), 274 to 294 (EMIILPTFLAITALLNLYFYM), and 323 to 343 (TIFLPPLIIISTMMLPLTPMI).

The protein belongs to the complex I subunit 2 family. In terms of assembly, core subunit of respiratory chain NADH dehydrogenase (Complex I) which is composed of 45 different subunits. Interacts with TMEM242.

The protein resides in the mitochondrion inner membrane. It carries out the reaction a ubiquinone + NADH + 5 H(+)(in) = a ubiquinol + NAD(+) + 4 H(+)(out). Functionally, core subunit of the mitochondrial membrane respiratory chain NADH dehydrogenase (Complex I) which catalyzes electron transfer from NADH through the respiratory chain, using ubiquinone as an electron acceptor. Essential for the catalytic activity and assembly of complex I. In Viverra tangalunga (Malayan civet), this protein is NADH-ubiquinone oxidoreductase chain 2.